We begin with the raw amino-acid sequence, 272 residues long: NH(3)-dependent NAD(+) synthetase (272 aa).

Position 45 to 52 (45 to 52) interacts with ATP; the sequence is GISGGQDS. Position 51 (Asp-51) interacts with Mg(2+). Arg-138 is a deamido-NAD(+) binding site. Thr-158 is an ATP binding site. A Mg(2+)-binding site is contributed by Glu-163. Positions 171 and 178 each coordinate deamido-NAD(+). ATP-binding residues include Lys-187 and Thr-209. 258–259 contacts deamido-NAD(+); the sequence is HK.

This sequence belongs to the NAD synthetase family. Homodimer.

It carries out the reaction deamido-NAD(+) + NH4(+) + ATP = AMP + diphosphate + NAD(+) + H(+). It functions in the pathway cofactor biosynthesis; NAD(+) biosynthesis; NAD(+) from deamido-NAD(+) (ammonia route): step 1/1. Functionally, catalyzes the ATP-dependent amidation of deamido-NAD to form NAD. Uses ammonia as a nitrogen source. The polypeptide is NH(3)-dependent NAD(+) synthetase (Bacillus licheniformis (strain ATCC 14580 / DSM 13 / JCM 2505 / CCUG 7422 / NBRC 12200 / NCIMB 9375 / NCTC 10341 / NRRL NRS-1264 / Gibson 46)).